Reading from the N-terminus, the 209-residue chain is Uracil phosphoribosyltransferase (209 aa).

Residues Arg79, Arg104, and 131 to 139 (TPVVATANT) contribute to the 5-phospho-alpha-D-ribose 1-diphosphate site. Uracil-binding positions include Ile194 and 199-201 (GDA). Asp200 is a 5-phospho-alpha-D-ribose 1-diphosphate binding site.

It belongs to the UPRTase family. It depends on Mg(2+) as a cofactor.

The enzyme catalyses UMP + diphosphate = 5-phospho-alpha-D-ribose 1-diphosphate + uracil. It functions in the pathway pyrimidine metabolism; UMP biosynthesis via salvage pathway; UMP from uracil: step 1/1. Allosterically activated by GTP. Its function is as follows. Catalyzes the conversion of uracil and 5-phospho-alpha-D-ribose 1-diphosphate (PRPP) to UMP and diphosphate. This chain is Uracil phosphoribosyltransferase, found in Bradyrhizobium diazoefficiens (strain JCM 10833 / BCRC 13528 / IAM 13628 / NBRC 14792 / USDA 110).